We begin with the raw amino-acid sequence, 288 residues long: Small ribosomal subunit protein uS3 (288 aa).

A KH type-2 domain is found at 38–106 (IRRMMSKGLE…QVQLNIIEVK (69 aa)). The segment at 209 to 288 (PGRETPAEAP…TQPAETQQEG (80 aa)) is disordered. The segment covering 219-232 (SRPRRERGDRSERP) has biased composition (basic and acidic residues). Residues 249 to 264 (AGRAAATTIAQAAETP) show a composition bias toward low complexity. A compositionally biased stretch (polar residues) spans 277–288 (AATQPAETQQEG).

It belongs to the universal ribosomal protein uS3 family. In terms of assembly, part of the 30S ribosomal subunit. Forms a tight complex with proteins S10 and S14.

Its function is as follows. Binds the lower part of the 30S subunit head. Binds mRNA in the 70S ribosome, positioning it for translation. This chain is Small ribosomal subunit protein uS3, found in Salinispora arenicola (strain CNS-205).